The chain runs to 319 residues: Pantothenate kinase (319 aa).

97–104 serves as a coordination point for ATP; sequence GSVAVGKS.

Belongs to the prokaryotic pantothenate kinase family.

Its subcellular location is the cytoplasm. It catalyses the reaction (R)-pantothenate + ATP = (R)-4'-phosphopantothenate + ADP + H(+). It functions in the pathway cofactor biosynthesis; coenzyme A biosynthesis; CoA from (R)-pantothenate: step 1/5. The sequence is that of Pantothenate kinase from Mesorhizobium japonicum (strain LMG 29417 / CECT 9101 / MAFF 303099) (Mesorhizobium loti (strain MAFF 303099)).